The sequence spans 392 residues: Na(+)/H(+) antiporter NhaA 2 (392 aa).

11 helical membrane-spanning segments follow: residues 20-40 (FFAA…AALI), 61-81 (LSVS…LVGL), 99-119 (ALPG…YVAF), 127-147 (IGGW…VLSL), 158-178 (IFLS…IALF), 181-201 (SDLS…LVAL), 209-229 (LLPY…SGIH), 265-285 (VAFA…LSGI), 298-318 (VALG…ALAI), 336-356 (GVAA…ALAF), and 365-385 (EVKV…VVVL).

The protein belongs to the NhaA Na(+)/H(+) (TC 2.A.33) antiporter family.

It is found in the cell inner membrane. The enzyme catalyses Na(+)(in) + 2 H(+)(out) = Na(+)(out) + 2 H(+)(in). Functionally, na(+)/H(+) antiporter that extrudes sodium in exchange for external protons. The protein is Na(+)/H(+) antiporter NhaA 2 of Pseudomonas syringae pv. syringae (strain B728a).